Consider the following 1079-residue polypeptide: Tudor domain-containing protein 7A (1079 aa).

The region spanning 3-76 is the HTH OST-type 1 domain; the sequence is DVELVKKMLR…TGEVMCFAGV (74 aa). The interval 153 to 175 is disordered; sequence LPSSRAPAWQMNRKSPVPEKTSV. 2 consecutive HTH OST-type domains span residues 205-270 and 366-434; these read DVEL…RLVY and LTTE…ILYT. Tudor domains lie at 519 to 576 and 708 to 765; these read SPKI…FMTL and RPFC…FLKE.

Belongs to the TDRD7 family.

The protein localises to the cytoplasm. In terms of biological role, component of specific cytoplasmic RNA granules involved in post-transcriptional regulation of specific genes: probably acts by binding to specific mRNAs and regulating their translation. Probably required during spermatogenesis. Required for structural integrity of granules in primordial germ cells (PGCs). This chain is Tudor domain-containing protein 7A (tdrd7a), found in Danio rerio (Zebrafish).